Consider the following 762-residue polypeptide: Cellulose synthase-like protein H2 (762 aa).

The span at 1–15 shows a compositional bias: low complexity; the sequence is MAVVAAAAATGSTTR. The segment at 1–39 is disordered; that stretch reads MAVVAAAAATGSTTRSGGGGGEGTRSGRKKPPPPPLQER. A run of 2 helical transmembrane segments spans residues 47–67 and 81–101; these read AWAW…LLAL and GVWR…ALNV. Active-site residues include aspartate 180 and aspartate 470. The next 6 membrane-spanning stretches (helical) occupy residues 541 to 561, 582 to 602, 619 to 639, 673 to 693, 708 to 728, and 739 to 759; these read LAYL…CYGL, FSVP…EYMA, IISV…SLGL, LPVF…VTVG, APGI…FPFV, and GIPW…VTFC.

It belongs to the glycosyltransferase 2 family. Plant cellulose synthase-like H subfamily.

The protein resides in the golgi apparatus membrane. Its function is as follows. Thought to be a Golgi-localized beta-glycan synthase that polymerize the backbones of noncellulosic polysaccharides (hemicelluloses) of plant cell wall. In Oryza sativa subsp. indica (Rice), this protein is Cellulose synthase-like protein H2 (CSLH2).